We begin with the raw amino-acid sequence, 962 residues long: AP2-associated protein kinase 1 (962 aa).

Residue Met1 is modified to N-acetylmethionine. The segment covering 1-11 has biased composition (basic and acidic residues); that stretch reads MKKFFDSRREQ. Residues 1-27 form a disordered region; that stretch reads MKKFFDSRREQGSSGLGSGSSGGGGSS. At Ser14 the chain carries Phosphoserine. Gly residues predominate over residues 14-27; the sequence is SGLGSGSSGGGGSS. The region spanning 46–314 is the Protein kinase domain; sequence VTVDEVLAEG…QVSYFSFKLL (269 aa). ATP contacts are provided by residues 52–60 and Lys74; that span reads LAEGGFALV. Asp176 serves as the catalytic Proton acceptor. Position 234 is a phosphotyrosine (Tyr234). Position 235 is a phosphoserine (Ser235). 2 disordered regions span residues 325 to 515 and 576 to 633; these read NSPI…QFQA and PQAQ…RAGH. Phosphothreonine is present on residues Thr353 and Thr388. Arg390 is modified (omega-N-methylarginine). The span at 397-418 shows a compositional bias: polar residues; that stretch reads PLPQATGPSNQPSLLASVSQPK. Residues 419 to 434 are compositionally biased toward low complexity; that stretch reads AQATPSQPLQSSQPKQ. The span at 435–444 shows a compositional bias: pro residues; that stretch reads PQAPPTPQQT. Residue Thr440 is modified to Phosphothreonine. Composition is skewed to low complexity over residues 445–485, 498–514, and 576–606; these read PAPQ…QPQQ, QQQQ…QQFQ, and PQAQ…KVQT. At Thr607 the chain carries Phosphothreonine. The span at 614–628 shows a compositional bias: polar residues; it reads GQKVGSLTPPSSPKT. Ser619 is modified (phosphoserine). Thr621 is modified (phosphothreonine). Phosphoserine occurs at positions 624, 625, 638, and 651. Residue Thr654 is modified to Phosphothreonine. A compositionally biased stretch (low complexity) spans 664-677; that stretch reads ASLSKSKSATTTPS. The segment at 664–702 is disordered; it reads ASLSKSKSATTTPSGSPRTSQQNVSNASEGSTWNPFDDD. The span at 678 to 697 shows a compositional bias: polar residues; it reads GSPRTSQQNVSNASEGSTWN. Phosphoserine occurs at positions 732, 847, 938, and 939. The interval 824–961 is clathrin-binding domain (CBD); that stretch reads EKADAAVESL…SLLLVDQLID (138 aa). Disordered stretches follow at residues 839–860 and 925–946; these read PPVA…TDSL and LITK…ESSL. The segment covering 846 to 860 has biased composition (polar residues); sequence PSHTESVTSNRTDSL. Residues 932–945 show a composition bias toward low complexity; the sequence is GGHSRNSSGSSESS.

This sequence belongs to the protein kinase superfamily. Ser/Thr protein kinase family. Interacts (via CBD domain) with clathrin. Interacts with AP-2 complex. Interacts with NUMB. Interacts with alpha-adaptin. Interacts with EPS15. Interacts with membrane-bound activated NOTCH1 but not with the inactive full-length form of NOTCH1. Preferentially interacts with monoubiquitinated activated NOTCH1 compared to the non-ubiquitinated form. In terms of processing, autophosphorylated.

The protein localises to the cell membrane. The protein resides in the membrane. It is found in the clathrin-coated pit. Its subcellular location is the presynapse. It carries out the reaction L-seryl-[protein] + ATP = O-phospho-L-seryl-[protein] + ADP + H(+). The enzyme catalyses L-threonyl-[protein] + ATP = O-phospho-L-threonyl-[protein] + ADP + H(+). Stimulated by clathrin. In terms of biological role, regulates clathrin-mediated endocytosis by phosphorylating the AP2M1/mu2 subunit of the adaptor protein complex 2 (AP-2) which ensures high affinity binding of AP-2 to cargo membrane proteins during the initial stages of endocytosis. Preferentially, may phosphorylate substrates on threonine residues. Regulates phosphorylation of other AP-2 subunits as well as AP-2 localization and AP-2-mediated internalization of ligand complexes. Phosphorylates NUMB and regulates its cellular localization, promoting NUMB localization to endosomes. Binds to and stabilizes the activated form of NOTCH1, increases its localization in endosomes and regulates its transcriptional activity. This chain is AP2-associated protein kinase 1 (Aak1), found in Rattus norvegicus (Rat).